Consider the following 443-residue polypeptide: Exodeoxyribonuclease 7 large subunit (443 aa).

This sequence belongs to the XseA family. In terms of assembly, heterooligomer composed of large and small subunits.

It is found in the cytoplasm. It catalyses the reaction Exonucleolytic cleavage in either 5'- to 3'- or 3'- to 5'-direction to yield nucleoside 5'-phosphates.. Bidirectionally degrades single-stranded DNA into large acid-insoluble oligonucleotides, which are then degraded further into small acid-soluble oligonucleotides. In Legionella pneumophila (strain Corby), this protein is Exodeoxyribonuclease 7 large subunit.